The following is a 380-amino-acid chain: S-adenosylmethionine:tRNA ribosyltransferase-isomerase (380 aa).

The segment covering 1–15 (MHSKHPTDTARRCET) has biased composition (basic and acidic residues). The interval 1 to 24 (MHSKHPTDTARRCETGTDSSDTAA) is disordered.

Belongs to the QueA family. In terms of assembly, monomer.

The protein localises to the cytoplasm. It carries out the reaction 7-aminomethyl-7-carbaguanosine(34) in tRNA + S-adenosyl-L-methionine = epoxyqueuosine(34) in tRNA + adenine + L-methionine + 2 H(+). Its pathway is tRNA modification; tRNA-queuosine biosynthesis. Functionally, transfers and isomerizes the ribose moiety from AdoMet to the 7-aminomethyl group of 7-deazaguanine (preQ1-tRNA) to give epoxyqueuosine (oQ-tRNA). This Oleidesulfovibrio alaskensis (strain ATCC BAA-1058 / DSM 17464 / G20) (Desulfovibrio alaskensis) protein is S-adenosylmethionine:tRNA ribosyltransferase-isomerase.